We begin with the raw amino-acid sequence, 516 residues long: MSEVKKPLALIILDGFGYSESDKYNAINAAKAPTWRKIWAENPKTTIATSGMAVGLPEGQMGNSEVGHMTLGAGRVVYQNFTRINKAIADGDFYTNPVYTKAVDDAQSQGKAVHVIGLLSDGGVHSHEDHMIAMMELAVKRGAEKVYMHAFLDGRDTPPRSAKAPLQKTEEKLKALGGGKIASIIGRFFALDRDNRWDRVQQAFDLMVDGKAAFTAQSATAGLEAAYERDENDEFVKATAIVDADGKPVTIEDGDAVIFMNFRPDRARQLTNAFVDKNFDGFARARVPALSDFVMTTEYSADIDTSCAYPPEDLVNSFGEVMAKNGKKQLRIAETEKYAHVTFFFSGGQESLYEGEDRILVPSPQVETYDEQPEMSAPEVTAKLVDAIENGGYDAIICNYANCDQVGHTGDFDASVKAVEAVDAALAEVFAALERVGGEALITADHGNVELMYDDEAQQLHTQHTTLPVPLVYVGKRDISLEQGGSLADIAPTMLALLDVPQPTEMNGRNLVKFSK.

2 residues coordinate Mn(2+): aspartate 14 and serine 64. The active-site Phosphoserine intermediate is serine 64. Substrate-binding positions include histidine 125, 155–156, arginine 187, arginine 193, 263–266, and lysine 337; these read RD and RPDR. 5 residues coordinate Mn(2+): aspartate 404, histidine 408, aspartate 445, histidine 446, and histidine 464.

The protein belongs to the BPG-independent phosphoglycerate mutase family. As to quaternary structure, monomer. The cofactor is Mn(2+).

It carries out the reaction (2R)-2-phosphoglycerate = (2R)-3-phosphoglycerate. It functions in the pathway carbohydrate degradation; glycolysis; pyruvate from D-glyceraldehyde 3-phosphate: step 3/5. Functionally, catalyzes the interconversion of 2-phosphoglycerate and 3-phosphoglycerate. This chain is 2,3-bisphosphoglycerate-independent phosphoglycerate mutase, found in Saccharophagus degradans (strain 2-40 / ATCC 43961 / DSM 17024).